The primary structure comprises 189 residues: Peptidyl-tRNA hydrolase (189 aa).

Tyr-14 is a binding site for tRNA. His-19 acts as the Proton acceptor in catalysis. Tyr-64, Asn-66, and Asn-112 together coordinate tRNA.

Belongs to the PTH family. As to quaternary structure, monomer.

The protein resides in the cytoplasm. It carries out the reaction an N-acyl-L-alpha-aminoacyl-tRNA + H2O = an N-acyl-L-amino acid + a tRNA + H(+). Hydrolyzes ribosome-free peptidyl-tRNAs (with 1 or more amino acids incorporated), which drop off the ribosome during protein synthesis, or as a result of ribosome stalling. Its function is as follows. Catalyzes the release of premature peptidyl moieties from peptidyl-tRNA molecules trapped in stalled 50S ribosomal subunits, and thus maintains levels of free tRNAs and 50S ribosomes. This Clostridium botulinum (strain Okra / Type B1) protein is Peptidyl-tRNA hydrolase.